Here is a 461-residue protein sequence, read N- to C-terminus: TWiK family of potassium channels protein 18 (461 aa).

Residues 1–21 lie on the Cytoplasmic side of the membrane; sequence MAIVAQGVSTILTTFQKTFKG. A helical membrane pass occupies residues 22–42; it reads LLPLIILVAYTLLGAWIFWMI. Residue Asn88 is glycosylated (N-linked (GlcNAc...) asparagine). The pore-forming intramembrane region spans 116–136; that stretch reads FLGSIFYCMTVYTTIGYGNIV. A helical membrane pass occupies residues 144-164; it reads FATILYAFIGIPLTVLSLYCL. At 165-224 the chain is on the cytoplasmic side; sequence GSLFAKGCKMLWRFFLKSTRVVSKDLSNKISEAADNIEEGTTAITPSAEKTENNDDDLLS. The helical transmembrane segment at 225-245 threads the bilayer; sequence FPISGLLLITVIWVIFCAVLF. An intramembrane region (pore-forming) is located at residues 253 to 273; the sequence is FGTSLYFTLISFTTIGFGDIL. The helical transmembrane segment at 281 to 301 threads the bilayer; it reads PIVGVLLLIGLSLVSTVMTLI. Residues 302 to 461 lie on the Cytoplasmic side of the membrane; it reads QQQIEALASG…GNEDYLEHDI (160 aa). A disordered region spans residues 328–347; it reads REDGEVDEHVDPEEDPENNK.

Belongs to the two pore domain potassium channel (TC 1.A.1.8) family. Expressed in body wall muscle.

The protein localises to the membrane. Its function is as follows. Outwardly rectifying potassium channel protein; activity is sharply augmented by increase in temperature. This Caenorhabditis elegans protein is TWiK family of potassium channels protein 18 (twk-18).